A 79-amino-acid chain; its full sequence is MKCATLFLVLSMVVLMAEPGDAFFHHIFRGIVHVGKSIHKLVTGGKAQQDQQDQQYQQDQQDQQAEQYQRFNRERAAFD.

The first 22 residues, 1 to 22, serve as a signal peptide directing secretion; the sequence is MKCATLFLVLSMVVLMAEPGDA. Glycine amide is present on G44. Positions 47–79 are excised as a propeptide; the sequence is AQQDQQDQQYQQDQQDQQAEQYQRFNRERAAFD. Residues 48–67 are disordered; it reads QQDQQDQQYQQDQQDQQAEQ.

It belongs to the pleurocidin family.

The protein resides in the secreted. The protein is Dicentracin of Dicentrarchus labrax (European seabass).